Reading from the N-terminus, the 311-residue chain is Probable manganese-dependent inorganic pyrophosphatase (311 aa).

6 residues coordinate Mn(2+): histidine 9, aspartate 13, aspartate 15, aspartate 77, histidine 99, and aspartate 151.

Belongs to the PPase class C family. Mn(2+) is required as a cofactor.

The protein resides in the cytoplasm. It catalyses the reaction diphosphate + H2O = 2 phosphate + H(+). This chain is Probable manganese-dependent inorganic pyrophosphatase, found in Streptococcus equi subsp. zooepidemicus (strain MGCS10565).